We begin with the raw amino-acid sequence, 629 residues long: Chaperone protein HtpG (629 aa).

Positions 1-343 are a; substrate-binding; the sequence is MQKQTLSFQA…SSDLPLNVSR (343 aa). Residues 344–558 form a b region; sequence ELLQESRAVK…DGDMSTQLAR (215 aa). Positions 559-629 are c; sequence MLKQAGQTVP…YVRRVNALLV (71 aa).

Belongs to the heat shock protein 90 family. In terms of assembly, homodimer.

Its subcellular location is the cytoplasm. Its function is as follows. Molecular chaperone. Has ATPase activity. In Polaromonas naphthalenivorans (strain CJ2), this protein is Chaperone protein HtpG.